Consider the following 257-residue polypeptide: Diacetyl reductase [(S)-acetoin forming] (257 aa).

An NAD(+)-binding site is contributed by 6-30; it reads IITGSAGGLGKGIAERLANDGFNIV. Ser-139 is a substrate binding site. Tyr-152 serves as the catalytic Proton acceptor. Lys-156 is a catalytic residue.

It belongs to the short-chain dehydrogenases/reductases (SDR) family.

It catalyses the reaction (S)-acetoin + NAD(+) = diacetyl + NADH + H(+). In terms of biological role, catalyzes the irreversible reduction of 2,3-butanediol to (S)-acetoin in the presence of NADH. The polypeptide is Diacetyl reductase [(S)-acetoin forming] (butA) (Staphylococcus epidermidis (strain ATCC 35984 / DSM 28319 / BCRC 17069 / CCUG 31568 / BM 3577 / RP62A)).